The sequence spans 132 residues: Small ribosomal subunit protein uS8 (132 aa).

The protein belongs to the universal ribosomal protein uS8 family. As to quaternary structure, part of the 30S ribosomal subunit. Contacts proteins S5 and S12.

Its function is as follows. One of the primary rRNA binding proteins, it binds directly to 16S rRNA central domain where it helps coordinate assembly of the platform of the 30S subunit. In Geobacillus kaustophilus (strain HTA426), this protein is Small ribosomal subunit protein uS8.